The following is a 290-amino-acid chain: Ribosomal RNA small subunit methyltransferase A (290 aa).

Residues Asn27, Leu29, Gly54, Glu75, Asp100, and Asn125 each coordinate S-adenosyl-L-methionine.

Belongs to the class I-like SAM-binding methyltransferase superfamily. rRNA adenine N(6)-methyltransferase family. RsmA subfamily.

It is found in the cytoplasm. It catalyses the reaction adenosine(1518)/adenosine(1519) in 16S rRNA + 4 S-adenosyl-L-methionine = N(6)-dimethyladenosine(1518)/N(6)-dimethyladenosine(1519) in 16S rRNA + 4 S-adenosyl-L-homocysteine + 4 H(+). Specifically dimethylates two adjacent adenosines (A1518 and A1519) in the loop of a conserved hairpin near the 3'-end of 16S rRNA in the 30S particle. May play a critical role in biogenesis of 30S subunits. This chain is Ribosomal RNA small subunit methyltransferase A, found in Streptococcus thermophilus (strain CNRZ 1066).